A 223-amino-acid polypeptide reads, in one-letter code: Thiopurine S-methyltransferase (223 aa).

Positions 10, 45, 66, and 127 each coordinate S-adenosyl-L-methionine.

It belongs to the class I-like SAM-binding methyltransferase superfamily. TPMT family.

It is found in the cytoplasm. It catalyses the reaction S-adenosyl-L-methionine + a thiopurine = S-adenosyl-L-homocysteine + a thiopurine S-methylether.. This is Thiopurine S-methyltransferase from Shewanella woodyi (strain ATCC 51908 / MS32).